Consider the following 944-residue polypeptide: Calcium-transporting ATPase type 2C member 2 (944 aa).

Residues M1–Y104 lie on the Cytoplasmic side of the membrane. The tract at residues V69–V93 is interaction with ORAI1. Residues L105–L125 traverse the membrane as a helical segment. The Extracellular portion of the chain corresponds to T126–K127. Residues E128–I148 form a helical membrane-spanning segment. The Cytoplasmic portion of the chain corresponds to Q149 to S229. The chain crosses the membrane as a helical span at residues P230–V250. Residues Q251–K291 are Extracellular-facing. T262 bears the Phosphothreonine mark. The residue at position 266 (S266) is a Phosphoserine. Residues L292–W312 form a helical membrane-spanning segment. Residues V313–A329 lie on the Cytoplasmic side of the membrane. Ca(2+) contacts are provided by V330, A331, I333, and E335. Residues V330–L350 form a helical membrane-spanning segment. The Extracellular portion of the chain corresponds to R351–S748. D377 (4-aspartylphosphate intermediate) is an active-site residue. Mg(2+) contacts are provided by D672 and D676. The helical transmembrane segment at T749–M769 threads the bilayer. Positions 766 and 770 each coordinate Ca(2+). Residues D770–A802 are Cytoplasmic-facing. The chain crosses the membrane as a helical span at residues L803–W823. Over R824–R835 the chain is Extracellular. The helical transmembrane segment at T836 to L853 threads the bilayer. The Cytoplasmic segment spans residues S854–M872. A helical transmembrane segment spans residues F873–L893. The Extracellular portion of the chain corresponds to Q894–S903. Residues A904–L924 traverse the membrane as a helical segment. Residues K925–V944 lie on the Cytoplasmic side of the membrane.

The protein belongs to the cation transport ATPase (P-type) (TC 3.A.3) family. Type IIA subfamily. In terms of assembly, interacts (via N-terminus) with ORAI1 (via N- and C-termini); this interaction regulates Ca(2+) influx at the plasma membrane. As to expression, expressed in hippocampal neurons (at protein level). Expressed in lactating mammary epithelium (at protein level).

Its subcellular location is the golgi apparatus. The protein resides in the trans-Golgi network membrane. The protein localises to the cell membrane. It localises to the basolateral cell membrane. It catalyses the reaction Ca(2+)(in) + ATP + H2O = Ca(2+)(out) + ADP + phosphate + H(+). It carries out the reaction Mn(2+)(in) + ATP + H2O = Mn(2+)(out) + ADP + phosphate + H(+). ATP-driven pump that supplies the Golgi apparatus with Ca(2+) and Mn(2+) ions, both essential cofactors for processing and trafficking of newly synthesized proteins in the secretory pathway. Within a catalytic cycle, acquires Ca(2+) or Mn(2+) ions on the cytoplasmic side of the membrane and delivers them to the lumenal side. The transfer of ions across the membrane is coupled to ATP hydrolysis and is associated with a transient phosphorylation that shifts the pump conformation from inward-facing to outward-facing state. Induces Ca(2+) influx independently of its ATP-driven pump function. At the basolateral membrane of mammary epithelial cells, interacts with Ca(2+) channel ORAI1 and mediates Ca(2+) entry independently of the Ca(2+) content of endoplasmic reticulum or Golgi stores. May facilitate transepithelial transport of large quantities of Ca(2+) for milk secretion via activation of Ca(2+) influx channels at the plasma membrane and active Ca(2+) transport at the Golgi apparatus. The protein is Calcium-transporting ATPase type 2C member 2 of Mus musculus (Mouse).